We begin with the raw amino-acid sequence, 235 residues long: Transmembrane protein 176A (235 aa).

S38 is subject to Phosphoserine. A run of 4 helical transmembrane segments spans residues 55–75, 86–106, 113–133, and 193–213; these read VASWVMQIVLGILSAVLGGFF, SGAAIWTGAVAVLAGAAAFIY, YWALLRTLLTLAAFSTAIAAL, and AMLLGVWILLLLASLTPLWLY.

The protein belongs to the TMEM176 family. In terms of assembly, interacts with MCOLN2.

Its subcellular location is the membrane. This is Transmembrane protein 176A (TMEM176A) from Homo sapiens (Human).